The sequence spans 673 residues: DNA mismatch repair protein MutL (673 aa).

This sequence belongs to the DNA mismatch repair MutL/HexB family.

In terms of biological role, this protein is involved in the repair of mismatches in DNA. It is required for dam-dependent methyl-directed DNA mismatch repair. May act as a 'molecular matchmaker', a protein that promotes the formation of a stable complex between two or more DNA-binding proteins in an ATP-dependent manner without itself being part of a final effector complex. This chain is DNA mismatch repair protein MutL, found in Ehrlichia chaffeensis (strain ATCC CRL-10679 / Arkansas).